Reading from the N-terminus, the 683-residue chain is Protein hook (683 aa).

A Calponin-homology (CH) domain is found at 5-123 (NGMYYSLLEW…RLLQLVLGCA (119 aa)). Coiled-coil stretches lie at residues 135 to 440 (EIMC…LKCG) and 484 to 594 (QTAL…AKEV).

It belongs to the hook family. Homodimer. Interacts with microtubules via its N-terminus.

The protein localises to the cytoplasm. The protein resides in the cytoskeleton. It is found in the endosome. Its subcellular location is the synapse. Functionally, involved in endocytic trafficking by stabilizing organelles of the endocytic pathway. Probably acts as a cytoskeletal linker protein required to tether endosome vesicles to the cytoskeleton. Involved in modulation of endocytosis at stages required for down-regulation of membrane proteins that control synapse size. Not involved in synaptic vesicle recycling. Required in R7 cells for boss endocytosis into multivesicular bodies (MVBs). Has a role in regulating adult longevity. In Drosophila grimshawi (Hawaiian fruit fly), this protein is Protein hook.